The sequence spans 131 residues: Ribonuclease VapC13 (131 aa).

The PINc domain maps to 2-128 (ILVDSNIPMY…RGFDSYPGIK (127 aa)). The Mg(2+) site is built by Asp5 and Asp99.

This sequence belongs to the PINc/VapC protein family. Mg(2+) serves as cofactor.

It localises to the secreted. Functionally, toxic component of a type II toxin-antitoxin (TA) system. An RNase. The cognate antitoxin is VapB13. This is Ribonuclease VapC13 from Mycobacterium tuberculosis (strain ATCC 25618 / H37Rv).